A 266-amino-acid chain; its full sequence is MEGSPAGPIEQKEARWESSWEEQPDWTLGCLSPESQFRIPGLPGCILSFQLKVCFLPVMWLFILLSLALISDAMVMDEKVKRSFVLDTASAICNYNAHYKNHPKYWCRGYFRDYCNIIAFSPNSTNHVALRDTGNQLIVTMSCLTKEDTGWYWCGIQRDFARDDMDFTELIVTDDKGTLANDFWSGKDLSGNKTRSCKAPKVVRKADRSRTSILIICILITGLGIISVISHLTKRRRSQRNRRVGNTLKPFSRVLTPKEMAPTEQM.

The segment at 1–20 is disordered; that stretch reads MEGSPAGPIEQKEARWESSW. Residues 55-75 form a helical membrane-spanning segment; the sequence is FLPVMWLFILLSLALISDAMV. A glycan (N-linked (GlcNAc...) asparagine) is linked at N192. A helical transmembrane segment spans residues 213–233; that stretch reads ILIICILITGLGIISVISHLT.

As to expression, expressed in the lung and bone. Expressed at lower levels in osteosarcoma tissues (at protein level).

The protein resides in the membrane. Plays a suppressive role in osteosarcoma malignancy by inhibiting NF-kappa-B activity. The chain is Transmembrane domain-containing protein TMIGD3 from Homo sapiens (Human).